A 94-amino-acid chain; its full sequence is Small ribosomal subunit protein bS20 (94 aa).

Over residues 1 to 10 (MANHASADKR) the composition is skewed to basic and acidic residues. The disordered stretch occupies residues 1 to 20 (MANHASADKRNRQRITRTAR). The segment covering 11–20 (NRQRITRTAR) has biased composition (basic residues).

The protein belongs to the bacterial ribosomal protein bS20 family.

Its function is as follows. Binds directly to 16S ribosomal RNA. This chain is Small ribosomal subunit protein bS20, found in Sorangium cellulosum (strain So ce56) (Polyangium cellulosum (strain So ce56)).